Here is a 70-residue protein sequence, read N- to C-terminus: Small ribosomal subunit protein bS21 (70 aa).

Positions 43–70 are disordered; the sequence is TERKRKAAAAVKRQHKRLRSLTLPPKLY. A compositionally biased stretch (basic residues) spans 45-61; it reads RKRKAAAAVKRQHKRLR.

This sequence belongs to the bacterial ribosomal protein bS21 family.

This is Small ribosomal subunit protein bS21 from Dechloromonas aromatica (strain RCB).